The primary structure comprises 373 residues: Glutamate 5-kinase (373 aa).

Lysine 15 is an ATP binding site. Substrate is bound by residues serine 55, aspartate 142, and asparagine 154. ATP contacts are provided by residues 174–175 (TD) and 216–222 (TGGMVTK). The PUA domain maps to 281–359 (SGRVIVDDGA…GEIEAILGYK (79 aa)).

Belongs to the glutamate 5-kinase family.

The protein localises to the cytoplasm. The enzyme catalyses L-glutamate + ATP = L-glutamyl 5-phosphate + ADP. The protein operates within amino-acid biosynthesis; L-proline biosynthesis; L-glutamate 5-semialdehyde from L-glutamate: step 1/2. Its function is as follows. Catalyzes the transfer of a phosphate group to glutamate to form L-glutamate 5-phosphate. In Geobacter metallireducens (strain ATCC 53774 / DSM 7210 / GS-15), this protein is Glutamate 5-kinase.